The sequence spans 278 residues: Shikimate dehydrogenase (NADP(+)) (278 aa).

Residues 19-21 (SLS) and Thr-66 contribute to the shikimate site. Catalysis depends on Lys-70, which acts as the Proton acceptor. 2 residues coordinate shikimate: Asn-91 and Asp-106. NADP(+) is bound by residues 130–134 (GAGGS), 152–157 (NRTVEK), and Leu-222. Tyr-224 provides a ligand contact to shikimate. Residue Gly-245 participates in NADP(+) binding.

Belongs to the shikimate dehydrogenase family. Homodimer.

It carries out the reaction shikimate + NADP(+) = 3-dehydroshikimate + NADPH + H(+). Its pathway is metabolic intermediate biosynthesis; chorismate biosynthesis; chorismate from D-erythrose 4-phosphate and phosphoenolpyruvate: step 4/7. In terms of biological role, involved in the biosynthesis of the chorismate, which leads to the biosynthesis of aromatic amino acids. Catalyzes the reversible NADPH linked reduction of 3-dehydroshikimate (DHSA) to yield shikimate (SA). The polypeptide is Shikimate dehydrogenase (NADP(+)) (Methanococcus aeolicus (strain ATCC BAA-1280 / DSM 17508 / OCM 812 / Nankai-3)).